The chain runs to 554 residues: Endochitinase (554 aa).

Positions Met1–Ser19 are cleaved as a signal peptide. One can recognise a GH18 domain in the interval Ala23–Tyr398. Residues Cys27 and Cys52 are joined by a disulfide bond. Position 76 to 77 (Leu76 to Asp77) interacts with chitin. Asn85 is a glycosylation site (N-linked (GlcNAc...) asparagine). Position 103–106 (Gly103–Ala106) interacts with chitin. Residue Glu146 is the Proton donor of the active site. Chitin contacts are provided by residues Tyr147 and Met213–Asp216. Asn303 carries an N-linked (GlcNAc...) asparagine glycan. Trp370 contributes to the chitin binding site. Positions Tyr398–Gly494 are disordered. Positions Pro431–Pro457 are enriched in low complexity. The span at Ile467–Pro477 shows a compositional bias: basic and acidic residues. Residues Ser495–Gln553 form the Chitin-binding type-2 domain. Cysteines 527 and 540 form a disulfide. Asn545 carries an N-linked (GlcNAc...) asparagine glycan.

This sequence belongs to the glycosyl hydrolase 18 family. Chitinase class II subfamily. In terms of tissue distribution, epidermis and gut.

It is found in the secreted. The enzyme catalyses Random endo-hydrolysis of N-acetyl-beta-D-glucosaminide (1-&gt;4)-beta-linkages in chitin and chitodextrins.. Functionally, digests chitin in the exoskeleton during the molting process. This is Endochitinase from Manduca sexta (Tobacco hawkmoth).